The chain runs to 932 residues: Protocadherin gamma-A6 (932 aa).

The first 29 residues, 1–29 (MAPPQRHPQRSEQVLLLTLLGTLWGAAAA), serve as a signal peptide directing secretion. Cadherin domains are found at residues 30 to 133 (QIRY…TPRF), 134 to 242 (LKEE…TPVF), 243 to 347 (TQPV…VPEV), 348 to 452 (VVTS…PPTF), 453 to 562 (PHSS…APEI), and 570 to 682 (DGST…EPSA). Residues 30 to 692 (QIRYSIPEEL…KPNDSDLTLY (663 aa)) lie on the Extracellular side of the membrane. N-linked (GlcNAc...) asparagine glycosylation is present at Asn-81. Residues Asn-419 and Asn-545 are each glycosylated (N-linked (GlcNAc...) asparagine). Residue Asn-685 is glycosylated (N-linked (GlcNAc...) asparagine). The chain crosses the membrane as a helical span at residues 693 to 713 (LVVAVAAVSCVFLAFVIVLLA). The Cytoplasmic segment spans residues 714–932 (LRLQRWHKSR…KKKSGKKEKK (219 aa)). 2 disordered regions span residues 803 to 841 (DPRQ…WPNN) and 902 to 932 (ATLT…KEKK). Residues 806 to 841 (QLQQAPPNTDWRFSQAQRPGTSGSQNGDDTGTWPNN) show a composition bias toward polar residues. The span at 922–932 (NKKKSGKKEKK) shows a compositional bias: basic residues.

The protein localises to the cell membrane. Potential calcium-dependent cell-adhesion protein. May be involved in the establishment and maintenance of specific neuronal connections in the brain. The polypeptide is Protocadherin gamma-A6 (PCDHGA6) (Pan troglodytes (Chimpanzee)).